The chain runs to 282 residues: Bis(5'-nucleosyl)-tetraphosphatase, symmetrical (282 aa).

It belongs to the Ap4A hydrolase family. Monomer.

It carries out the reaction P(1),P(4)-bis(5'-adenosyl) tetraphosphate + H2O = 2 ADP + 2 H(+). In terms of biological role, hydrolyzes diadenosine 5',5'''-P1,P4-tetraphosphate to yield ADP. The sequence is that of Bis(5'-nucleosyl)-tetraphosphatase, symmetrical from Escherichia coli O157:H7.